The chain runs to 202 residues: NADH-quinone oxidoreductase subunit C (202 aa).

Belongs to the complex I 30 kDa subunit family. As to quaternary structure, NDH-1 is composed of 14 different subunits. Subunits NuoB, C, D, E, F, and G constitute the peripheral sector of the complex.

Its subcellular location is the cell inner membrane. It catalyses the reaction a quinone + NADH + 5 H(+)(in) = a quinol + NAD(+) + 4 H(+)(out). In terms of biological role, NDH-1 shuttles electrons from NADH, via FMN and iron-sulfur (Fe-S) centers, to quinones in the respiratory chain. The immediate electron acceptor for the enzyme in this species is believed to be ubiquinone. Couples the redox reaction to proton translocation (for every two electrons transferred, four hydrogen ions are translocated across the cytoplasmic membrane), and thus conserves the redox energy in a proton gradient. The protein is NADH-quinone oxidoreductase subunit C of Bartonella quintana (strain Toulouse) (Rochalimaea quintana).